The sequence spans 1005 residues: MGVGGGGGGGGGEAAAAVAVEGDEAGKGRRWWRVKVKLSTVAVVAWVLASAALWAGLHWRFRRAALHKAEEALVCMCEERARMLQDQFAVSVNHVHALAILVATFHYDKHPPALDQDTFAVYAARTSFERPLLSGVAYAQRVVHADRESFERQQGWIIKTMKHEPSPAQDEYAPVIYSQETISYIEGLDVMSGEEDRENILRARATGKAVLTRPFRLMSNHLGVVLTFPVYLVDLPNDTAVEDRVAATAGYLGGAFDVESLVENLLRQLAGNQELVVNVYDVTNHSNPLVMYGSEVPLGIPSPSHTYTLDFGDPLRKHQMVCRYRNKLHVSWSAITTPSGVFVICMLVGYIIYAAWSRYDNVKEDCRKMEALKKRAEAADIAKSQFLATVSHEIRTPMNGVLGMLDMLLDTELKSTQRDYAQTAQVCGKALISLINEVLDRAKIEAGKIDLESVPFDLRSILDDVISLFSSKSREKGIELAVYVSERVPEILLGDPGRFRQIITNLVGNSIKFTERGHIFVQVHLADHSNLATEAKIEPVVNGMNGHKDEAIAIPTSGSHNTLSGFEAADSRNNWENFKLLLSYEKNEMPYESDSDKVTLVVSVEDTGIGIPLHAQGRVFTPFMQADSSTSRNYGGTGIGLSISKCLVEIMGGQINFVSRPLVGSTFTFTAVLRRCDKNAISDSKTVALHPLPSSFKGLSALLVDKRPVRATVTKYHLQRLGITSEVVGTIDPTFGVLSGRNGSSLTSIGKKQPCMLLIESDSWGPQMDVSLHARLQEMKQSDRIHVLPKVFLLSAAESDKVKKIHAVDSVIPKPLKASALAACLFQALGITQPSHEKRDDSGSLHGRDGSGSLHGLLLGKNILVVDDNKVNLRVAAGTLKKYGAKVECVESGKDALSLLQVPHKFDLCLMDIQMPEMDGFEATRQIRAMEGKANEQADDSESGSEIAAKTAKWHLPILAMTADVIQATHEECTKCGMDGYVSKPFEEKQLFQAVQKFLGPCVSS.

The Cytoplasmic segment spans residues 1–37 (MGVGGGGGGGGGEAAAAVAVEGDEAGKGRRWWRVKVK). Residues 38 to 58 (LSTVAVVAWVLASAALWAGLH) form a helical membrane-spanning segment. Over 59 to 333 (WRFRRAALHK…YRNKLHVSWS (275 aa)) the chain is Extracellular. In terms of domain architecture, CHASE spans 110–321 (HPPALDQDTF…GDPLRKHQMV (212 aa)). The helical transmembrane segment at 334 to 354 (AITTPSGVFVICMLVGYIIYA) threads the bilayer. The Cytoplasmic segment spans residues 355 to 1005 (AWSRYDNVKE…QKFLGPCVSS (651 aa)). One can recognise a Histidine kinase domain in the interval 389–675 (TVSHEIRTPM…TFTFTAVLRR (287 aa)). Phosphohistidine; by autocatalysis is present on His392. Response regulatory domains are found at residues 700–829 (SALL…FQAL) and 862–999 (NILV…QKFL). Asp912 bears the 4-aspartylphosphate mark.

In terms of processing, activation probably requires a transfer of a phosphate group between a His in the transmitter domain and an Asp of the receiver domain. Highly expressed in young leaves and spikelets, and at lower levels in roots, mature leaves and stems.

Its subcellular location is the cell membrane. It catalyses the reaction ATP + protein L-histidine = ADP + protein N-phospho-L-histidine.. Cytokinin receptor related to bacterial two-component regulators. Functions as a histidine kinase and transmits the stress signal to a downstream MAPK cascade. The protein is Probable histidine kinase 4 of Oryza sativa subsp. japonica (Rice).